Reading from the N-terminus, the 96-residue chain is Putative pterin-4-alpha-carbinolamine dehydratase (96 aa).

Belongs to the pterin-4-alpha-carbinolamine dehydratase family.

The enzyme catalyses (4aS,6R)-4a-hydroxy-L-erythro-5,6,7,8-tetrahydrobiopterin = (6R)-L-erythro-6,7-dihydrobiopterin + H2O. The sequence is that of Putative pterin-4-alpha-carbinolamine dehydratase from Synechocystis sp. (strain ATCC 27184 / PCC 6803 / Kazusa).